Consider the following 130-residue polypeptide: Small ribosomal subunit protein uS11c (130 aa).

This sequence belongs to the universal ribosomal protein uS11 family. In terms of assembly, part of the 30S ribosomal subunit.

The protein localises to the plastid. It localises to the chloroplast. This chain is Small ribosomal subunit protein uS11c, found in Chaetosphaeridium globosum (Charophycean green alga).